Here is a 333-residue protein sequence, read N- to C-terminus: Phosphate acetyltransferase (333 aa).

Belongs to the phosphate acetyltransferase and butyryltransferase family.

The protein localises to the cytoplasm. It catalyses the reaction acetyl-CoA + phosphate = acetyl phosphate + CoA. Its pathway is metabolic intermediate biosynthesis; acetyl-CoA biosynthesis; acetyl-CoA from acetate: step 2/2. This chain is Phosphate acetyltransferase (pta), found in Clostridium acetobutylicum (strain ATCC 824 / DSM 792 / JCM 1419 / IAM 19013 / LMG 5710 / NBRC 13948 / NRRL B-527 / VKM B-1787 / 2291 / W).